Consider the following 573-residue polypeptide: Anti-Muellerian hormone type-2 receptor (573 aa).

The first 17 residues, 1–17 (MLGSLGLWALLPTAVEA), serve as a signal peptide directing secretion. Over 18–149 (PPNRRTCVFF…APGESIWMAL (132 aa)) the chain is Extracellular. 2 disulfide bridges follow: Cys55/Cys79 and Cys92/Cys109. A glycan (N-linked (GlcNAc...) asparagine) is linked at Asn66. N-linked (GlcNAc...) asparagine glycosylation is present at Asn119. Residues 150 to 170 (VLLGLFLLLLLLLGSIILALL) traverse the membrane as a helical segment. The Cytoplasmic portion of the chain corresponds to 171–573 (QRKNYRVRGE…PQPACTLSPV (403 aa)). Residues 203-518 (LCFSQVIREG…AHPQESHPFP (316 aa)) form the Protein kinase domain. ATP is bound by residues 209–217 (IREGGHAVV) and Lys230. The Proton acceptor role is filled by Asp333.

Belongs to the protein kinase superfamily. TKL Ser/Thr protein kinase family. TGFB receptor subfamily. As to quaternary structure, interacts with type I receptor ACVR1. Mg(2+) is required as a cofactor. Requires Mn(2+) as cofactor.

The protein localises to the membrane. The enzyme catalyses L-threonyl-[receptor-protein] + ATP = O-phospho-L-threonyl-[receptor-protein] + ADP + H(+). It carries out the reaction L-seryl-[receptor-protein] + ATP = O-phospho-L-seryl-[receptor-protein] + ADP + H(+). In terms of biological role, on ligand binding, forms a receptor complex consisting of two type II and two type I transmembrane serine/threonine kinases. Type II receptors phosphorylate and activate type I receptors which autophosphorylate, then bind and activate SMAD transcriptional regulators. Receptor for anti-Muellerian hormone. The chain is Anti-Muellerian hormone type-2 receptor (AMHR2) from Homo sapiens (Human).